The sequence spans 115 residues: uncharacterized protein (115 aa).

This is an uncharacterized protein from Haemophilus influenzae (strain ATCC 51907 / DSM 11121 / KW20 / Rd).